The primary structure comprises 601 residues: Elongation factor 4 (601 aa).

In terms of domain architecture, tr-type G spans 7-189 (RNIRNFSIIA…AIVHRIPPPK (183 aa)). GTP contacts are provided by residues 19 to 24 (DHGKST) and 136 to 139 (NKID).

The protein belongs to the TRAFAC class translation factor GTPase superfamily. Classic translation factor GTPase family. LepA subfamily.

It is found in the cell inner membrane. It catalyses the reaction GTP + H2O = GDP + phosphate + H(+). Its function is as follows. Required for accurate and efficient protein synthesis under certain stress conditions. May act as a fidelity factor of the translation reaction, by catalyzing a one-codon backward translocation of tRNAs on improperly translocated ribosomes. Back-translocation proceeds from a post-translocation (POST) complex to a pre-translocation (PRE) complex, thus giving elongation factor G a second chance to translocate the tRNAs correctly. Binds to ribosomes in a GTP-dependent manner. In Xanthomonas campestris pv. campestris (strain 8004), this protein is Elongation factor 4.